The following is a 188-amino-acid chain: dCTP deaminase (188 aa).

DCTP is bound by residues 111-116, 135-137, Gln156, Tyr170, and Gln180; these read KSTYAR and TLE. Residue Glu137 is the Proton donor/acceptor of the active site.

Belongs to the dCTP deaminase family. Homotrimer.

The catalysed reaction is dCTP + H2O + H(+) = dUTP + NH4(+). The protein operates within pyrimidine metabolism; dUMP biosynthesis; dUMP from dCTP (dUTP route): step 1/2. Catalyzes the deamination of dCTP to dUTP. In Pseudomonas fluorescens (strain SBW25), this protein is dCTP deaminase.